The following is a 363-amino-acid chain: MRVSDFYFDLPDELIARYPKPDRTASRLLQLNGENGEITHRTFADILDQIHEGDLLIFNNTRVIPARMFGRKASGGKVEVLVERILSDTRFLAHVRSSKAPKEGAELWLGEDKLGEHHGVKMIMVARHDTLFELEIAQKQTALLDVLQQIGHMPLPPYIDRPDEEADKERYQTVYNKVPGAVAAPTAGLHFDDALLAQLKAKGVNFAFVTLHVGAGTFQPVRVEQIEDHKMHAEYVEVPQEVCDAIIATKQAGKRVIAVGTTSVRSVESAALATEEKGEHALITPYFSDTSIFIYPGKTFRVVDCLITNFHLPESTLIMLVSAFAGYRHTMQAYQSAVENRYRFFSYGDAMFISKNPHVNGLD.

Belongs to the QueA family. In terms of assembly, monomer.

The protein resides in the cytoplasm. It catalyses the reaction 7-aminomethyl-7-carbaguanosine(34) in tRNA + S-adenosyl-L-methionine = epoxyqueuosine(34) in tRNA + adenine + L-methionine + 2 H(+). The protein operates within tRNA modification; tRNA-queuosine biosynthesis. In terms of biological role, transfers and isomerizes the ribose moiety from AdoMet to the 7-aminomethyl group of 7-deazaguanine (preQ1-tRNA) to give epoxyqueuosine (oQ-tRNA). In Pasteurella multocida (strain Pm70), this protein is S-adenosylmethionine:tRNA ribosyltransferase-isomerase.